Here is a 156-residue protein sequence, read N- to C-terminus: Small ribosomal subunit protein uS7 (156 aa).

The protein belongs to the universal ribosomal protein uS7 family. In terms of assembly, part of the 30S ribosomal subunit. Contacts proteins S9 and S11.

Functionally, one of the primary rRNA binding proteins, it binds directly to 16S rRNA where it nucleates assembly of the head domain of the 30S subunit. Is located at the subunit interface close to the decoding center, probably blocks exit of the E-site tRNA. The chain is Small ribosomal subunit protein uS7 from Dinoroseobacter shibae (strain DSM 16493 / NCIMB 14021 / DFL 12).